The sequence spans 230 residues: Uracil-DNA glycosylase (230 aa).

Asp70 acts as the Proton acceptor in catalysis.

Belongs to the uracil-DNA glycosylase (UDG) superfamily. UNG family.

Its subcellular location is the cytoplasm. The enzyme catalyses Hydrolyzes single-stranded DNA or mismatched double-stranded DNA and polynucleotides, releasing free uracil.. In terms of biological role, excises uracil residues from the DNA which can arise as a result of misincorporation of dUMP residues by DNA polymerase or due to deamination of cytosine. The sequence is that of Uracil-DNA glycosylase from Pseudomonas savastanoi pv. phaseolicola (strain 1448A / Race 6) (Pseudomonas syringae pv. phaseolicola (strain 1448A / Race 6)).